Reading from the N-terminus, the 220-residue chain is RPA-interacting protein B (220 aa).

The interaction with importin beta stretch occupies residues 1-45 (MEAERRHRALYKGTTPPWKETYRKRCVERLKSNRSKLLDKFRQVG). An interaction with RPA1 region spans residues 49 to 165 (HGGVGGSFLV…QCGVYINTQS (117 aa)). The RIP-type zinc finger occupies 138-213 (CPVCNRNYLT…ASLFMSCQEC (76 aa)).

As to quaternary structure, interacts directly with the RPA1 subunit of RPA complex. Interacts with importin beta, but not with importin alpha. Forms a complex with the RPA complex and importin beta, which is dissociated by Ran-GTP.

The protein resides in the nucleus. Its function is as follows. Mediates the import of RPA complex into the nucleus, via its interaction with importin beta. In Xenopus laevis (African clawed frog), this protein is RPA-interacting protein B (rpain-b).